Consider the following 96-residue polypeptide: ATP-dependent Clp protease adapter protein ClpS (96 aa).

It belongs to the ClpS family. In terms of assembly, binds to the N-terminal domain of the chaperone ClpA.

In terms of biological role, involved in the modulation of the specificity of the ClpAP-mediated ATP-dependent protein degradation. The chain is ATP-dependent Clp protease adapter protein ClpS from Streptomyces coelicolor (strain ATCC BAA-471 / A3(2) / M145).